The primary structure comprises 510 residues: Protein disulfide-isomerase (510 aa).

The signal sequence occupies residues 1 to 19 (MLRRALLCLAVAAAPGLYA). The Thioredoxin 1 domain occupies 20 to 136 (DAPEEEDHVL…IVNWLKKRTG (117 aa)). Residues C55 and C58 each act as nucleophile in the active site. Cysteines 55 and 58 form a disulfide. K202 is modified (N6-acetyllysine). N6-succinyllysine occurs at positions 224 and 273. Phosphoserine occurs at positions 333 and 359. Residues 351-477 (GKIKPHLMSQ…FKKFLESGGQ (127 aa)) enclose the Thioredoxin 2 domain. Active-site nucleophile residues include C399 and C402. A disulfide bridge connects residues C399 and C402. S429 carries the phosphoserine modification. Residues 473 to 510 (ESGGQDGAGDDDDLEDLEEAEEPDMEEDDDQKAVKDEL) are disordered. Residues 480–502 (AGDDDDLEDLEEAEEPDMEEDDD) show a composition bias toward acidic residues. The Prevents secretion from ER signature appears at 507 to 510 (KDEL).

Belongs to the protein disulfide isomerase family. As to quaternary structure, heterodimer; heterodimerizes with the protein microsomal triglyceride transfer MTTP. Homodimer. Homodimer. Monomers and homotetramers may also occur. Interacts with P4HA2, forming a heterotetramer consisting of 2 alpha subunits (P4HA2) and 2 beta (P4HB), where P4HB plays the role of a structural subunit; this tetramer catalyzes the formation of 4-hydroxyproline in collagen. Also constitutes the structural subunit of the microsomal triacylglycerol transfer protein MTTP in mammalian cells. Stabilizes both enzymes and retain them in the ER without contributing to the catalytic activity. Binds UBQLN1. Interacts with ERO1B. Interacts with ILDR2. Interacts with ERN1/IRE1A (via N-terminus); the interaction is enhanced by phosphorylation of P4HB by FAM20C in response to endoplasmic reticulum stress and results in attenuation of ERN1 activity. Phosphorylation of Ser-359 by FAM20C is induced by endoplasmic reticulum stress and results in a functional switch from oxidoreductase to molecular chaperone. It also promotes interaction with ERN1.

It is found in the endoplasmic reticulum. Its subcellular location is the endoplasmic reticulum lumen. The protein localises to the melanosome. The protein resides in the cell membrane. The catalysed reaction is Catalyzes the rearrangement of -S-S- bonds in proteins.. This multifunctional protein catalyzes the formation, breakage and rearrangement of disulfide bonds. At the cell surface, seems to act as a reductase that cleaves disulfide bonds of proteins attached to the cell. May therefore cause structural modifications of exofacial proteins. Inside the cell, seems to form/rearrange disulfide bonds of nascent proteins. At high concentrations and following phosphorylation by FAM20C, functions as a chaperone that inhibits aggregation of misfolded proteins. At low concentrations, facilitates aggregation (anti-chaperone activity). May be involved with other chaperones in the structural modification of the TG precursor in hormone biogenesis. Also acts as a structural subunit of various enzymes such as prolyl 4-hydroxylase and microsomal triacylglycerol transfer protein MTTP. Receptor for LGALS9; the interaction retains P4HB at the cell surface of Th2 T helper cells, increasing disulfide reductase activity at the plasma membrane, altering the plasma membrane redox state and enhancing cell migration. This is Protein disulfide-isomerase (P4HB) from Macaca fuscata fuscata (Japanese macaque).